The following is a 160-amino-acid chain: Small ribosomal subunit protein uS7 (160 aa).

The protein belongs to the universal ribosomal protein uS7 family. As to quaternary structure, part of the 30S ribosomal subunit. Contacts proteins S9 and S11.

In terms of biological role, one of the primary rRNA binding proteins, it binds directly to 16S rRNA where it nucleates assembly of the head domain of the 30S subunit. Is located at the subunit interface close to the decoding center, probably blocks exit of the E-site tRNA. This Rickettsia conorii (strain ATCC VR-613 / Malish 7) protein is Small ribosomal subunit protein uS7.